A 580-amino-acid chain; its full sequence is Pentatricopeptide repeat-containing protein At5g10690 (580 aa).

PPR repeat units lie at residues 76–110 (NTIVMNSVLEACVHCGNIDLALRMFHEMAEPGGIG), 112–142 (DSISYATILKGLGKARRIDEAFQMLETIEYG), 151–181 (SSSLIYGLLDALINAGDLRRANGLLARYDIL), 189–223 (SVLIYNLLMKGYVNSESPQAAINLLDEMLRLRLEP), 224–254 (DRLTYNTLIHACIKCGDLDAAMKFFNDMKEK), 266–296 (DVVTYTTLVKGFGDATDLLSLQEIFLEMKLC), 302–337 (DRTAFTAVVDAMLKCGSTSGALCVFGEILKRSGANE), 342–376 (KPHLYLSMMRAFAVQGDYGMVRNLYLRLWPDSSGS), and 382–417 (QQEADNLLMEAALNDGQLDEALGILLSIVRRWKTIP). One can recognise a CBS domain in the interval 486–553 (VPIVDDRGSC…IVVHCGNFSG (68 aa)).

Belongs to the PPR family. P subfamily.

This Arabidopsis thaliana (Mouse-ear cress) protein is Pentatricopeptide repeat-containing protein At5g10690 (CBSPPR1).